The chain runs to 371 residues: Transaldolase (371 aa).

Residue Lys132 forms an Isoglutamyl lysine isopeptide (Lys-Gln) (interchain with Q-Cter in protein Pup) linkage. Lys142 functions as the Schiff-base intermediate with substrate in the catalytic mechanism.

The protein belongs to the transaldolase family. Type 2 subfamily.

Its subcellular location is the cytoplasm. The enzyme catalyses D-sedoheptulose 7-phosphate + D-glyceraldehyde 3-phosphate = D-erythrose 4-phosphate + beta-D-fructose 6-phosphate. The protein operates within carbohydrate degradation; pentose phosphate pathway; D-glyceraldehyde 3-phosphate and beta-D-fructose 6-phosphate from D-ribose 5-phosphate and D-xylulose 5-phosphate (non-oxidative stage): step 2/3. Functionally, transaldolase is important for the balance of metabolites in the pentose-phosphate pathway. This chain is Transaldolase (tal), found in Mycolicibacterium smegmatis (strain ATCC 700084 / mc(2)155) (Mycobacterium smegmatis).